A 468-amino-acid chain; its full sequence is Sulfate adenylyltransferase subunit 1 (468 aa).

The 218-residue stretch at 22 to 239 (KELLRFLTCG…TVEIASDKNA (218 aa)) folds into the tr-type G domain. The G1 stretch occupies residues 31-38 (GSVDDGKS). 31-38 (GSVDDGKS) is a GTP binding site. The tract at residues 89–93 (GITID) is G2. The interval 110-113 (DTPG) is G3. Residues 110–114 (DTPGH) and 165–168 (NKMD) each bind GTP. Residues 165-168 (NKMD) are G4. The interval 202–204 (SAL) is G5.

The protein belongs to the TRAFAC class translation factor GTPase superfamily. Classic translation factor GTPase family. CysN/NodQ subfamily. As to quaternary structure, heterodimer composed of CysD, the smaller subunit, and CysN.

The catalysed reaction is sulfate + ATP + H(+) = adenosine 5'-phosphosulfate + diphosphate. The protein operates within sulfur metabolism; hydrogen sulfide biosynthesis; sulfite from sulfate: step 1/3. Functionally, with CysD forms the ATP sulfurylase (ATPS) that catalyzes the adenylation of sulfate producing adenosine 5'-phosphosulfate (APS) and diphosphate, the first enzymatic step in sulfur assimilation pathway. APS synthesis involves the formation of a high-energy phosphoric-sulfuric acid anhydride bond driven by GTP hydrolysis by CysN coupled to ATP hydrolysis by CysD. The polypeptide is Sulfate adenylyltransferase subunit 1 (Teredinibacter turnerae (strain ATCC 39867 / T7901)).